A 307-amino-acid polypeptide reads, in one-letter code: Porphobilinogen deaminase (307 aa).

Residue C241 is modified to S-(dipyrrolylmethanemethyl)cysteine.

This sequence belongs to the HMBS family. Monomer. Dipyrromethane serves as cofactor.

It carries out the reaction 4 porphobilinogen + H2O = hydroxymethylbilane + 4 NH4(+). The protein operates within porphyrin-containing compound metabolism; protoporphyrin-IX biosynthesis; coproporphyrinogen-III from 5-aminolevulinate: step 2/4. In terms of biological role, tetrapolymerization of the monopyrrole PBG into the hydroxymethylbilane pre-uroporphyrinogen in several discrete steps. The sequence is that of Porphobilinogen deaminase from Coxiella burnetii (strain CbuK_Q154) (Coxiella burnetii (strain Q154)).